The following is a 98-amino-acid chain: Keratin, high sulfur matrix protein, IIIB3 (98 aa).

The residue at position 1 (A1) is an N-acetylalanine.

The protein belongs to the KRTAP type 3 family. In terms of assembly, interacts with wool keratins. As to expression, wool.

In the wool cortex, wool keratin intermediate filaments are embedded in an interfilamentous matrix, consisting of hair keratin-associated proteins (KRTAP), which are essential for the formation of a rigid and resistant wool shaft through their extensive disulfide bond cross-linking with abundant cysteine residues of wool keratins. The matrix proteins include the high-sulfur and high-glycine-tyrosine keratins. The sequence is that of Keratin, high sulfur matrix protein, IIIB3 from Ovis aries (Sheep).